The sequence spans 492 residues: UPF0236 protein TTE1650/TTE2708 (492 aa).

The protein belongs to the UPF0236 family.

The polypeptide is UPF0236 protein TTE1650/TTE2708 (Caldanaerobacter subterraneus subsp. tengcongensis (strain DSM 15242 / JCM 11007 / NBRC 100824 / MB4) (Thermoanaerobacter tengcongensis)).